Reading from the N-terminus, the 470-residue chain is Serine carboxypeptidase ctsa-4.1 (470 aa).

Residues 1 to 19 (MKLLSILFIFVSSYSFCLA) form the signal peptide. N132 carries N-linked (GlcNAc...) asparagine glycosylation. S169 is a catalytic residue. N316 carries an N-linked (GlcNAc...) asparagine glycan. The active site involves D380. The N-linked (GlcNAc...) asparagine glycan is linked to N396. H441 is an active-site residue.

It belongs to the peptidase S10 family.

It catalyses the reaction Release of a C-terminal amino acid with broad specificity.. The protein is Serine carboxypeptidase ctsa-4.1 of Caenorhabditis elegans.